A 341-amino-acid polypeptide reads, in one-letter code: Short chain dehydrogenase FGM9 (341 aa).

Residues Leu-38, Lys-63, Asp-88, and Asn-114 each contribute to the NADP(+) site. Active-site proton donor residues include Ser-167 and Tyr-200. Positions 200 and 204 each coordinate NADP(+). The Lowers pKa of active site Tyr role is filled by Lys-204.

This sequence belongs to the short-chain dehydrogenases/reductases (SDR) family.

It functions in the pathway secondary metabolite biosynthesis. Functionally, short chain dehydrogenase; part of the Fg3_54/C64 gene cluster that mediates the biosynthesis of the octapeptide fusaoctaxin A, a virulence factor that is required for cell-to-cell invasiveness of plant host. The 2 nonribosomal peptide synthetases NRPS9 and NRPS5 form an assembly line which likely utilizes GABA as a starter unit (loaded on the unique module M1 of NRPS9) and sequentially incorporates seven extender units composed of the residues L-Ala, L-allo-Ile, L-Ser, L-Val, L-Ser, L-Leu and L-Leu, respectively. During the process, each of the residues that are tethered on modules M3-M7 of NRPS5 containing an E domain can undergo an epimerization reaction to produce a D-configuration before the transpeptidation reaction occurs. The elongation of the peptidyl chain might be terminated by module M8-mediated L-Leu incorporation, followed by R domain-catalyzed 4 electron reduction to release the resulting octapeptide from the assembly line as an alcohol. Fusaoctaxin A is cleaved by the cluster specific ABC transporter FGM5 to the pentapeptide fusapentaxin A and the tripeptide fusatrixin A. The other enzymes from the cluster, FGM1, FGM2, FGM3 and FGM9 seem not to be involved in the biosynthesis of fusaoctaxin A and their functions have still to be determined. The polypeptide is Short chain dehydrogenase FGM9 (Gibberella zeae (strain ATCC MYA-4620 / CBS 123657 / FGSC 9075 / NRRL 31084 / PH-1) (Wheat head blight fungus)).